We begin with the raw amino-acid sequence, 201 residues long: Holliday junction resolvase RecU (201 aa).

T87, D89, D102, and Q121 together coordinate Mg(2+).

Belongs to the RecU family. Requires Mg(2+) as cofactor.

Its subcellular location is the cytoplasm. The catalysed reaction is Endonucleolytic cleavage at a junction such as a reciprocal single-stranded crossover between two homologous DNA duplexes (Holliday junction).. In terms of biological role, endonuclease that resolves Holliday junction intermediates in genetic recombination. Cleaves mobile four-strand junctions by introducing symmetrical nicks in paired strands. Promotes annealing of linear ssDNA with homologous dsDNA. Required for DNA repair, homologous recombination and chromosome segregation. The sequence is that of Holliday junction resolvase RecU from Levilactobacillus brevis (strain ATCC 367 / BCRC 12310 / CIP 105137 / JCM 1170 / LMG 11437 / NCIMB 947 / NCTC 947) (Lactobacillus brevis).